The chain runs to 185 residues: Elongation factor P (185 aa).

Belongs to the elongation factor P family.

It localises to the cytoplasm. The protein operates within protein biosynthesis; polypeptide chain elongation. In terms of biological role, involved in peptide bond synthesis. Stimulates efficient translation and peptide-bond synthesis on native or reconstituted 70S ribosomes in vitro. Probably functions indirectly by altering the affinity of the ribosome for aminoacyl-tRNA, thus increasing their reactivity as acceptors for peptidyl transferase. In Lactococcus lactis subsp. lactis (strain IL1403) (Streptococcus lactis), this protein is Elongation factor P (efp).